Reading from the N-terminus, the 879-residue chain is MSCVQQAAQHRSKPRGNTRAIGMPPIAHHPAPAAPDIAYRRATRGEQPAVYQGVVVARQQGRMRCVQLDQISRGTGTDAGVRNAQRLRGTNAGLIVEPASAGYSTLRHYIARLQRQALAVFEQAQFFGCIDQHIRIRAHAEASARRGKCPHREHAVAQIRLGDRAQTDDRAAGDDRLQFVRIHVRGVHQTPARIHRRVGQQPLHRTLPGPGQAGIHFTLLFGDMDVDGAIGERHQRRQLRRGDRTQAVRRQPKHRIRQRFQAVSAVVQQACETIDAVNQAALRRAGSGTAEIRMRIEHRQQAETDAGVGGRGGDALGHFAGMRVRRTAHGVVQIVEFADAGEAAFEHFHIRLFGDRLQAVRIEPVDEAVHQLAPAPEAVAAASADFGQPRHAALEGMAVQIAQARQQHVAARVGQGSSGTGLQRGDAALLCRDPHPARPAVGQQRPGGPEHLHLLVSHWTPSIAELIVYTYQTPRACAMHCDVLWHNAQLMTLDAADGGLGIVDDGTVACQQGRIVYAGPAAQAPALQPHATHDCQRRWISPGLIDCHTHLVYAGNRANEFEQRLRGASYADIAAAGGGIVATVRATRAADDAALLAASLPRLDAMLGEGVTTLEIKSGYGLTLDDEIKQLRVARQLAALRKVEVVPTFLGAHAVPPGGDAQRYTDQVCTQMIPAIAAQGLAEAVDVFCEHLAFSHAQAEQVFIAAQAHGLHIKIHAEQLSNQHGAELAARYGALSADHIEYLDQAGIAAMAGAGTVAVLLPGAFYFTRDTQVPPIAALRAAGVPLALATDCNPGTSPLTSPLLAMNMAATLFRMTVDECIAGFTREAARALGRSERLGRLRAGMDCDLAIWDIDAPADLVYRMGFNPLHARVLRGHLC.

Positions 1-32 (MSCVQQAAQHRSKPRGNTRAIGMPPIAHHPAP) are disordered. The segment at 1-478 (MSCVQQAAQH…YTYQTPRACA (478 aa)) is unknown. The interval 479-879 (MHCDVLWHNA…HARVLRGHLC (401 aa)) is imidazolonepropionase. Fe(3+)-binding residues include His-548 and His-550. Residues His-548 and His-550 each contribute to the Zn(2+) site. 4-imidazolone-5-propanoate-binding residues include Arg-557, Tyr-620, and His-653. Tyr-620 serves as a coordination point for N-formimidoyl-L-glutamate. His-716 serves as a coordination point for Fe(3+). Position 716 (His-716) interacts with Zn(2+). Gln-719 is a binding site for 4-imidazolone-5-propanoate. Asp-791 is a binding site for Fe(3+). Residue Asp-791 participates in Zn(2+) binding. Positions 793 and 795 each coordinate N-formimidoyl-L-glutamate. Thr-796 contributes to the 4-imidazolone-5-propanoate binding site.

It belongs to the metallo-dependent hydrolases superfamily. HutI family. Zn(2+) is required as a cofactor. Fe(3+) serves as cofactor.

It is found in the cytoplasm. It carries out the reaction 4-imidazolone-5-propanoate + H2O = N-formimidoyl-L-glutamate. The protein operates within amino-acid degradation; L-histidine degradation into L-glutamate; N-formimidoyl-L-glutamate from L-histidine: step 3/3. Its function is as follows. Catalyzes the hydrolytic cleavage of the carbon-nitrogen bond in imidazolone-5-propanoate to yield N-formimidoyl-L-glutamate. It is the third step in the universal histidine degradation pathway. In Xanthomonas oryzae pv. oryzae (strain KACC10331 / KXO85), this protein is Imidazolonepropionase (hutI).